A 541-amino-acid chain; its full sequence is Chaperonin GroEL (541 aa).

Residues 29-32, 86-90, glycine 413, and aspartate 495 each bind ATP; these read TLGP and DGTTT.

The protein belongs to the chaperonin (HSP60) family. Forms a cylinder of 14 subunits composed of two heptameric rings stacked back-to-back. Interacts with the co-chaperonin GroES.

Its subcellular location is the cytoplasm. It catalyses the reaction ATP + H2O + a folded polypeptide = ADP + phosphate + an unfolded polypeptide.. Functionally, together with its co-chaperonin GroES, plays an essential role in assisting protein folding. The GroEL-GroES system forms a nano-cage that allows encapsulation of the non-native substrate proteins and provides a physical environment optimized to promote and accelerate protein folding. The polypeptide is Chaperonin GroEL (Thermoanaerobacter pseudethanolicus (strain ATCC 33223 / 39E) (Clostridium thermohydrosulfuricum)).